Reading from the N-terminus, the 250-residue chain is Gamma-secretase subunit APH1-like (250 aa).

7 helical membrane passes run 5 to 25 (AGIGYALVALGPSLSLFVSVI), 29 to 49 (PFLILTVLSSTLLWLVSLIIL), 57 to 77 (LPLKANVWWPYALLVITSVCF), 116 to 136 (IALAGGLGHGVAHAVFFCLSL), 157 to 177 (FLISAIIALAFVTIHTFSMVI), 191 to 211 (IIVPVIHLTAGMLTLVNFASE), and 212 to 232 (GCVIGVPLLYLVASLTLVHCG).

The protein belongs to the APH-1 family. In terms of assembly, probable component of the gamma-secretase complex, a complex composed of a presenilin homodimer, nicastrin, APH1 and PEN2.

It localises to the membrane. In terms of biological role, probable subunit of the gamma-secretase complex, an endoprotease complex that catalyzes the intramembrane cleavage of integral proteins such as Notch receptors. The sequence is that of Gamma-secretase subunit APH1-like from Arabidopsis thaliana (Mouse-ear cress).